A 342-amino-acid chain; its full sequence is Antihemorrhagic factor HSF (342 aa).

Positions methionine 1–serine 19 are cleaved as a signal peptide. 2 Cystatin fetuin-A-type domains span residues valine 22–histidine 130 and arginine 141–valine 254. Residues arginine 23 to aspartate 25 carry the Cell attachment site motif. Positions glycine 24–methionine 108 are indispensable for metalloproteinase inhibition. 6 cysteine pairs are disulfide-bonded: cysteine 28–cysteine 332, cysteine 85–cysteine 96, cysteine 110–cysteine 129, cysteine 143–cysteine 146, cysteine 205–cysteine 217, and cysteine 230–cysteine 253. Residue asparagine 142 is glycosylated (N-linked (GlcNAc...) asparagine). Asparagine 204 carries N-linked (GlcNAc...) asparagine glycosylation. Asparagine 282 carries N-linked (GlcNAc...) asparagine glycosylation.

It belongs to the fetuin family. Post-translationally, cys-63 may exist in a mixed disulfide form with a thiol compound such as glutathione. As to expression, expressed by the liver.

It is found in the secreted. Inhibits hemorrhagic and proteolytic activities of metalloproteinases (HR1A, HR1B, HR2a, HR2b and H2 proteinase from T.flavodidis and brevilysins H3, H4, H6 and L4 from A.halys brevicaudus). Has no effect on brevilysins H2. Has no effect on papain and cathepsin-B. This chain is Antihemorrhagic factor HSF, found in Protobothrops flavoviridis (Habu).